The following is a 583-amino-acid chain: Complement factor I (583 aa).

The N-terminal stretch at methionine 1–cysteine 18 is a signal peptide. Cystine bridges form between cysteine 33–cysteine 255, cysteine 43–cysteine 54, cysteine 48–cysteine 59, cysteine 61–cysteine 93, cysteine 67–cysteine 86, cysteine 75–cysteine 106, cysteine 141–cysteine 181, cysteine 154–cysteine 214, cysteine 186–cysteine 196, cysteine 229–cysteine 247, cysteine 259–cysteine 271, cysteine 266–cysteine 284, cysteine 278–cysteine 293, cysteine 327–cysteine 453, cysteine 365–cysteine 381, and cysteine 373–cysteine 444. Positions isoleucine 55–alanine 108 constitute a Kazal-like domain. 4 N-linked (GlcNAc...) asparagine glycosylation sites follow: asparagine 70, asparagine 103, asparagine 173, and asparagine 177. The SRCR domain occupies valine 114–valine 212. LDL-receptor class A domains are found at residues valine 213 to lysine 257 and alanine 258 to glutamate 294. The Ca(2+) site is built by lysine 239, aspartate 242, isoleucine 244, aspartate 246, aspartate 252, and glutamate 253. The Ca(2+) site is built by tyrosine 276, asparagine 279, glutamate 281, aspartate 283, aspartate 289, and glutamate 290. The Peptidase S1 domain occupies isoleucine 340–glycine 574. Active-site charge relay system residues include histidine 380 and aspartate 429. N-linked (GlcNAc...) asparagine glycosylation is found at asparagine 464 and asparagine 494. Intrachain disulfides connect cysteine 467–cysteine 531, cysteine 495–cysteine 510, and cysteine 521–cysteine 550. The Charge relay system role is filled by serine 525. Asparagine 536 carries N-linked (GlcNAc...) asparagine glycosylation.

This sequence belongs to the peptidase S1 family. Heterodimer of a light and heavy chains; disulfide-linked. The fully processed and mature protein circulates as a zymogen, and is allosterically activated by substrate-induced remodeling of the active site. As to expression, plasma.

It localises to the secreted. The protein resides in the extracellular space. It carries out the reaction Inactivates complement subcomponents C3b, iC3b and C4b by proteolytic cleavage.. Functionally, responsible for cleaving the alpha-chains of C4b and C3b in the presence of the cofactors C4-binding protein and factor H respectively. The protein is Complement factor I (CFI) of Pongo abelii (Sumatran orangutan).